The chain runs to 193 residues: Peptidyl-tRNA hydrolase (193 aa).

Tyrosine 17 lines the tRNA pocket. Histidine 22 acts as the Proton acceptor in catalysis. TRNA is bound by residues phenylalanine 68, asparagine 70, and asparagine 115.

This sequence belongs to the PTH family. As to quaternary structure, monomer.

It localises to the cytoplasm. The catalysed reaction is an N-acyl-L-alpha-aminoacyl-tRNA + H2O = an N-acyl-L-amino acid + a tRNA + H(+). In terms of biological role, hydrolyzes ribosome-free peptidyl-tRNAs (with 1 or more amino acids incorporated), which drop off the ribosome during protein synthesis, or as a result of ribosome stalling. Its function is as follows. Catalyzes the release of premature peptidyl moieties from peptidyl-tRNA molecules trapped in stalled 50S ribosomal subunits, and thus maintains levels of free tRNAs and 50S ribosomes. This Alteromonas mediterranea (strain DSM 17117 / CIP 110805 / LMG 28347 / Deep ecotype) protein is Peptidyl-tRNA hydrolase.